The sequence spans 156 residues: Cell division protein SepF (156 aa).

Residues 15–58 form a disordered region; the sequence is SDVVPEDEDDEVIDEEPESSFDTDRSVTPIPAASTQPSTSQRKS. Residues 18–35 are compositionally biased toward acidic residues; it reads VPEDEDDEVIDEEPESSF. Residues 47–57 show a composition bias toward polar residues; sequence ASTQPSTSQRK.

This sequence belongs to the SepF family. As to quaternary structure, homodimer. Interacts with FtsZ.

It is found in the cytoplasm. Its function is as follows. Cell division protein that is part of the divisome complex and is recruited early to the Z-ring. Probably stimulates Z-ring formation, perhaps through the cross-linking of FtsZ protofilaments. Its function overlaps with FtsA. This chain is Cell division protein SepF, found in Bifidobacterium animalis subsp. lactis (strain AD011).